The chain runs to 198 residues: Recombination protein RecR (198 aa).

The segment at 57–72 (CAMCNTFTESAVCETC) adopts a C4-type zinc-finger fold. Positions 80-175 (ALLCVVETPG…KVSRLARGVP (96 aa)) constitute a Toprim domain.

This sequence belongs to the RecR family.

Its function is as follows. May play a role in DNA repair. It seems to be involved in an RecBC-independent recombinational process of DNA repair. It may act with RecF and RecO. This is Recombination protein RecR from Herminiimonas arsenicoxydans.